A 190-amino-acid polypeptide reads, in one-letter code: uncharacterized protein (190 aa).

Helical transmembrane passes span 15-35, 58-78, 94-114, and 148-168; these read LVMS…VLAI, FSSF…GVLI, FFSA…YFAF, and FLFF…SFFV.

The protein resides in the membrane. This is an uncharacterized protein from Saccharomyces cerevisiae (strain ATCC 204508 / S288c) (Baker's yeast).